Consider the following 364-residue polypeptide: Heme A synthase (364 aa).

8 helical membrane passes run 25–45, 111–131, 139–159, 174–194, 212–232, 270–290, 305–325, and 327–347; these read ALRL…LVGG, FLAR…WATG, WPLV…WWMV, LATH…VMRG, AIAL…VAGL, VQFV…YHMV, SVVL…ALLL, and VPLD…GFTV. Histidine 274 contributes to the heme binding site. Residue histidine 335 participates in heme binding.

It belongs to the COX15/CtaA family. Type 2 subfamily. As to quaternary structure, interacts with CtaB. Heme b serves as cofactor.

It localises to the cell membrane. It catalyses the reaction Fe(II)-heme o + 2 A + H2O = Fe(II)-heme a + 2 AH2. The protein operates within porphyrin-containing compound metabolism; heme A biosynthesis; heme A from heme O: step 1/1. Functionally, catalyzes the conversion of heme O to heme A by two successive hydroxylations of the methyl group at C8. The first hydroxylation forms heme I, the second hydroxylation results in an unstable dihydroxymethyl group, which spontaneously dehydrates, resulting in the formyl group of heme A. This chain is Heme A synthase, found in Allorhizobium ampelinum (strain ATCC BAA-846 / DSM 112012 / S4) (Agrobacterium vitis (strain S4)).